The chain runs to 97 residues: Acylphosphatase (97 aa).

Residues 7-97 (RLTAWVHGHV…QERFEGFVER (91 aa)) form the Acylphosphatase-like domain. Catalysis depends on residues R22 and N40.

The protein belongs to the acylphosphatase family.

It catalyses the reaction an acyl phosphate + H2O = a carboxylate + phosphate + H(+). The chain is Acylphosphatase (acyP) from Mycobacterium avium (strain 104).